The chain runs to 282 residues: Acetyl-coenzyme A carboxylase carboxyl transferase subunit beta (282 aa).

The CoA carboxyltransferase N-terminal domain occupies 29-282 (LWRTCPKCQR…LMKYGGKQND (254 aa)). The Zn(2+) site is built by Cys-33, Cys-36, Cys-51, and Cys-54. A C4-type zinc finger spans residues 33–54 (CPKCQRTLFAAQMDEYATCPGC).

Belongs to the AccD/PCCB family. In terms of assembly, acetyl-CoA carboxylase is a heterohexamer composed of biotin carboxyl carrier protein (AccB), biotin carboxylase (AccC) and two subunits each of ACCase subunit alpha (AccA) and ACCase subunit beta (AccD). Zn(2+) is required as a cofactor.

It localises to the cytoplasm. The catalysed reaction is N(6)-carboxybiotinyl-L-lysyl-[protein] + acetyl-CoA = N(6)-biotinyl-L-lysyl-[protein] + malonyl-CoA. The protein operates within lipid metabolism; malonyl-CoA biosynthesis; malonyl-CoA from acetyl-CoA: step 1/1. Component of the acetyl coenzyme A carboxylase (ACC) complex. Biotin carboxylase (BC) catalyzes the carboxylation of biotin on its carrier protein (BCCP) and then the CO(2) group is transferred by the transcarboxylase to acetyl-CoA to form malonyl-CoA. The polypeptide is Acetyl-coenzyme A carboxylase carboxyl transferase subunit beta (Limosilactobacillus fermentum (strain NBRC 3956 / LMG 18251) (Lactobacillus fermentum)).